Consider the following 261-residue polypeptide: MSGKTYRATGINLRRMPLGESDLLMTILTRENGLVRAVARGARKANARIGGRTEQFVVNDLQLYRGRSLDQLTQAESLRTFPGLLQDLGRLTAAQYLAEGVLQEATEGQAQEDLYDLLLVHLERLAATPSHQIAARLVHGVYQLLAVGGVAPEVHFCTVSHRPISAESAGFSVEGGGLVALECLSHERVGFRLDIEQVAALQLLADADLTPASLDWNYLWIGLERLLRRHIEFHFDRPLRAATLLEICFEPLAVPAAASPQ.

This sequence belongs to the RecO family.

Functionally, involved in DNA repair and RecF pathway recombination. This chain is DNA repair protein RecO, found in Gloeobacter violaceus (strain ATCC 29082 / PCC 7421).